The sequence spans 105 residues: Large ribosomal subunit protein bL21 (105 aa).

The protein belongs to the bacterial ribosomal protein bL21 family. Part of the 50S ribosomal subunit. Contacts protein L20.

Its function is as follows. This protein binds to 23S rRNA in the presence of protein L20. This is Large ribosomal subunit protein bL21 from Blochmanniella pennsylvanica (strain BPEN).